The following is a 25-amino-acid chain: Small ribosomal subunit protein eS32 (25 aa).

The segment at 1–25 (MREKWKKKRSRRLRRKRRKMRARSK) is disordered.

Belongs to the eukaryotic ribosomal protein eS32 family. As to quaternary structure, component of the large ribosomal subunit.

This chain is Small ribosomal subunit protein eS32 (rpl41), found in Agaricus bisporus (White button mushroom).